The following is a 316-amino-acid chain: MKLRYLFILLIILAVTSVFIGVEDLSPLDLFDLSKQEASTLFASRLPRLISIVIAGLSMSICGLIMQQISRNKFVSPTTAGTMDWARLGILISLLLFTSASPLIKMLVAFVFALAGNFLFMKILERIKFNDTIFIPLVGLMLGNIVSSIATFIAYKYDLIQNVSSWLQGDFSLVVKGRYELLYLSIPLVIIAYVYADKFTLAGMGESFSVNLGLKYKRVVNIGLIIVSLITSLVILTVGMLPFLGLIIPNIVSIYRGDNLKSSLPHTVLLGAVFVLFCDILGRIIIFPYEISIGLMVGIIGSGIFLFMLLRRKAYA.

8 helical membrane passes run 5–25 (YLFI…VEDL), 49–69 (LISI…MQQI), 94–114 (LLLF…VFAL), 133–153 (IFIP…ATFI), 181–201 (LLYL…KFTL), 224–244 (LIIV…LPFL), 268–288 (VLLG…IIFP), and 290–310 (EISI…FMLL).

It belongs to the binding-protein-dependent transport system permease family. FecCD subfamily. In terms of assembly, the complex is composed of two ATP-binding proteins (YclP), two transmembrane proteins (YclN and YclO) and a solute-binding protein (YclQ).

The protein resides in the cell membrane. In terms of biological role, part of the ABC transporter complex YclNOPQ involved in uptake of ferric-petrobactin. Petrobactin is a photoreactive 3,4-catecholate siderophore produced by many members of the B.cereus group, including B.anthracis. Probably responsible for the translocation of the substrate across the membrane. The protein is Petrobactin import system permease protein YclN (yclN) of Bacillus subtilis (strain 168).